Consider the following 176-residue polypeptide: Natural cytotoxicity triggering receptor 3 (176 aa).

The signal sequence occupies residues 1 to 18 (MAWMLLLILIMVYPGSCA). The Ig-like domain occupies 19–126 (LWVSQPPEIR…VGTGNGTRLV (108 aa)). The Extracellular segment spans residues 19-135 (LWVSQPPEIR…VVEKEYPQLG (117 aa)). Cys39 and Cys108 form a disulfide bridge. N-linked (GlcNAc...) asparagine glycosylation is found at Asn42 and Asn121. Residues 136–156 (AGTVLLLRAGFYAVSFLSVAV) form a helical membrane-spanning segment. Residues 157-176 (GSTLYYQGKCHCHMGTHCHS) are Cytoplasmic-facing.

Belongs to the natural cytotoxicity receptor (NCR) family. In terms of assembly, homodimer in the unliganted form. Interacts with CD3Z. Interacts with and is activated by binding to NCR3LG1. Interacts with and is activated by binding to BAG6. Interacts with and is inhibited by binding to LGALS3.

It is found in the cell membrane. Its function is as follows. Cell membrane receptor of natural killer/NK cells that is activated by binding of extracellular ligands including BAG6 and NCR3LG1. Stimulates NK cells cytotoxicity toward neighboring cells producing these ligands. It controls, for instance, NK cells cytotoxicity against tumor cells. Engagement of NCR3 by BAG6 also promotes myeloid dendritic cells (DC) maturation, both through killing DCs that did not acquire a mature phenotype, and inducing the release by NK cells of TNFA and IFNG that promote DC maturation. The sequence is that of Natural cytotoxicity triggering receptor 3 (NCR3) from Macaca fascicularis (Crab-eating macaque).